Consider the following 51-residue polypeptide: uncharacterized protein (51 aa).

Residues 10–29 form a helical membrane-spanning segment; that stretch reads LFLYHPLFLLLLYIYLVLFI.

The protein resides in the plastid. Its subcellular location is the chloroplast membrane. This is an uncharacterized protein from Anthoceros angustus (Hornwort).